The sequence spans 334 residues: Glycerol-3-phosphate dehydrogenase [NAD(P)+] (334 aa).

The NADPH site is built by Ser-14, Tyr-15, His-35, and Lys-109. Positions 109, 138, and 140 each coordinate sn-glycerol 3-phosphate. NADPH is bound at residue Ala-142. Sn-glycerol 3-phosphate is bound by residues Lys-194, Asp-247, Ser-257, Arg-258, and Asn-259. The active-site Proton acceptor is Lys-194. Arg-258 is an NADPH binding site. The NADPH site is built by Val-282 and Glu-284.

This sequence belongs to the NAD-dependent glycerol-3-phosphate dehydrogenase family.

The protein resides in the cytoplasm. The enzyme catalyses sn-glycerol 3-phosphate + NAD(+) = dihydroxyacetone phosphate + NADH + H(+). The catalysed reaction is sn-glycerol 3-phosphate + NADP(+) = dihydroxyacetone phosphate + NADPH + H(+). The protein operates within membrane lipid metabolism; glycerophospholipid metabolism. Catalyzes the reduction of the glycolytic intermediate dihydroxyacetone phosphate (DHAP) to sn-glycerol 3-phosphate (G3P), the key precursor for phospholipid synthesis. The polypeptide is Glycerol-3-phosphate dehydrogenase [NAD(P)+] (Tolumonas auensis (strain DSM 9187 / NBRC 110442 / TA 4)).